A 420-amino-acid chain; its full sequence is Pregnancy-associated glycoprotein 2 (420 aa).

Residues 1 to 15 (MKWLVILGLVALSDC) form the signal peptide. Asn56 and Asn79 each carry an N-linked (GlcNAc...) asparagine glycan. One can recognise a Peptidase A1 domain in the interval 76–417 (YVGNISIGTP…DEGQNRIGLA (342 aa)). Residue Asp94 is part of the active site. 2 disulfides stabilise this stretch: Cys107/Cys112 and Cys268/Cys272. Residue Asp277 is part of the active site. Cys341 and Cys376 are joined by a disulfide.

This sequence belongs to the peptidase A1 family. In terms of tissue distribution, expressed throughout the chorion, with the signal localized exclusively over the trophectoderm.

Its subcellular location is the secreted. The protein resides in the extracellular space. The polypeptide is Pregnancy-associated glycoprotein 2 (PAG2) (Sus scrofa (Pig)).